A 90-amino-acid polypeptide reads, in one-letter code: Protein LURE 1.2 (90 aa).

Positions 1–19 are cleaved as a signal peptide; sequence MKLPIIFLTLLIFVSSCTS. N23 is a glycosylation site (N-linked (GlcNAc...) asparagine). Cystine bridges form between C58–C75, C61–C82, and C65–C84. The PRK6 binding stretch occupies residues 67 to 87; the sequence is RRGKYIRTCSFERKLCRCSIS.

This sequence belongs to the DEFL family. In terms of assembly, interacts with MDIS1, MIK1, MIK2 and TDR/PXY, but not with MDIS2. Binds to PRK6 LRRs. In terms of tissue distribution, expressed in the pistil. Detected exclusively in the synergid cells.

It is found in the secreted. Its function is as follows. Pollen tube attractants guiding pollen tubes to the ovular micropyle. Attracts specifically pollen tubes from A.thaliana, but not those from A.lyrata. Triggers endocytosis of MDIS1 in the pollen tube tip. The sequence is that of Protein LURE 1.2 from Arabidopsis thaliana (Mouse-ear cress).